The following is a 463-amino-acid chain: NADH dehydrogenase [ubiquinone] iron-sulfur protein 2, mitochondrial (463 aa).

Residues 1-33 (MAALRALCGFRGVAAQVLRPGAGVRLPIQPSRG) constitute a mitochondrion transit peptide. At Lys62 the chain carries N6-acetyllysine. At Arg118 the chain carries Symmetric dimethylarginine. Cys326, Cys332, and Cys347 together coordinate [4Fe-4S] cluster.

The protein belongs to the complex I 49 kDa subunit family. In terms of assembly, core subunit of respiratory chain NADH dehydrogenase (Complex I) which is composed of 45 different subunits. Component of the iron-sulfur (IP) fragment of the enzyme. Interacts with NDUFAF3. Interacts with NDUFAF7. Interacts with CERS2. Requires [4Fe-4S] cluster as cofactor. Post-translationally, dimethylation at Arg-118 by NDUFAF7 takes place after NDUFS2 assembles into the complex I, leading to stabilize the early intermediate complex.

The protein resides in the mitochondrion inner membrane. It carries out the reaction a ubiquinone + NADH + 5 H(+)(in) = a ubiquinol + NAD(+) + 4 H(+)(out). In terms of biological role, core subunit of the mitochondrial membrane respiratory chain NADH dehydrogenase (Complex I) which catalyzes electron transfer from NADH through the respiratory chain, using ubiquinone as an electron acceptor. Essential for the catalytic activity of complex I. Essential for the assembly of complex I. Redox-sensitive, critical component of the oxygen-sensing pathway in the pulmonary vasculature which plays a key role in acute pulmonary oxygen-sensing and hypoxic pulmonary vasoconstriction. Plays an important role in carotid body sensing of hypoxia. Essential for glia-like neural stem and progenitor cell proliferation, differentiation and subsequent oligodendrocyte or neuronal maturation. This is NADH dehydrogenase [ubiquinone] iron-sulfur protein 2, mitochondrial (NDUFS2) from Homo sapiens (Human).